A 105-amino-acid polypeptide reads, in one-letter code: uncharacterized protein (105 aa).

Positions 80–105 are disordered; the sequence is TGGPTSSTCTRRSDLATGRGSDRRPD.

This is an uncharacterized protein from Micromonospora rosea.